A 508-amino-acid chain; its full sequence is Photosystem II CP47 reaction center protein (508 aa).

6 helical membrane passes run 21–36 (SVHI…WAGS), 101–115 (IVFS…IWHW), 140–156 (GIHL…FGAF), 203–218 (IAAG…FHLS), 237–252 (VLSS…AFVV), and 457–472 (TFAL…HGAR).

It belongs to the PsbB/PsbC family. PsbB subfamily. As to quaternary structure, PSII is composed of 1 copy each of membrane proteins PsbA, PsbB, PsbC, PsbD, PsbE, PsbF, PsbH, PsbI, PsbJ, PsbK, PsbL, PsbM, PsbT, PsbX, PsbY, PsbZ, Psb30/Ycf12, at least 3 peripheral proteins of the oxygen-evolving complex and a large number of cofactors. It forms dimeric complexes. The cofactor is Binds multiple chlorophylls. PSII binds additional chlorophylls, carotenoids and specific lipids..

The protein resides in the plastid. It is found in the chloroplast thylakoid membrane. Functionally, one of the components of the core complex of photosystem II (PSII). It binds chlorophyll and helps catalyze the primary light-induced photochemical processes of PSII. PSII is a light-driven water:plastoquinone oxidoreductase, using light energy to abstract electrons from H(2)O, generating O(2) and a proton gradient subsequently used for ATP formation. The polypeptide is Photosystem II CP47 reaction center protein (Chloranthus spicatus (Chulantree)).